Consider the following 2500-residue polypeptide: Non-reducing polyketide synthase atr1 (2500 aa).

Residues Val13–Leu260 are N-terminal acylcarrier protein transacylase domain (SAT). A Ketosynthase family 3 (KS3) domain is found at Thr385 to Gln808. Catalysis depends on for beta-ketoacyl synthase activity residues Cys557, His692, and His731. The interval Met908 to Asp1199 is malonyl-CoA:ACP transacylase (MAT) domain. Residue Ser995 is the For acyl/malonyl transferase activity of the active site. Residues Pro1286–Gln1413 form an N-terminal hotdog fold region. The 299-residue stretch at Pro1286 to Glu1584 folds into the PKS/mFAS DH domain. Positions Arg1287–Leu1583 are product template (PT) domain. His1317 functions as the Proton acceptor; for dehydratase activity in the catalytic mechanism. Positions Ser1433–Glu1584 are C-terminal hotdog fold. Asp1495 functions as the Proton donor; for dehydratase activity in the catalytic mechanism. The segment at Ala1594–Asn1649 is disordered. Low complexity predominate over residues Ser1602–Thr1617. The 77-residue stretch at Asn1649–Lys1725 folds into the Carrier domain. Ser1683 is subject to O-(pantetheine 4'-phosphoryl)serine. Residues Lys2164 to Arg2496 are thioesterase (TE) domain. Active-site for thioesterase activity residues include Ser2285 and Asp2434.

It carries out the reaction 6 malonyl-CoA + 2 acetyl-CoA + 2 S-adenosyl-L-methionine + 3 H(+) = 4-O-demethylbarbatate + 2 S-adenosyl-L-homocysteine + 6 CO2 + 8 CoA + H2O. Its pathway is secondary metabolite biosynthesis; terpenoid biosynthesis. In terms of biological role, non-reducing polyketide synthase; part of the gene cluster that mediates the biosynthesis of atranorin, a depside of polyketide origin that accumulates in the cortical or medullary layers of lichen thalli. The first step in the pathway is performed by the non-reducing polyketide synthase atr1 that produces 4-O-demethylbarbatic acid composed of two 3-methylorsellinic acid (3MOA) moieties from S-adenosyl-L-methionine (SAM), acetyl-CoA and malonyl-CoA units. The pathway continues with the actions of the cytochrome P450 monooygenase atr2 that catalizes the oxidation of c-9 and the O-methyltransferase atr3 that performs the methylation of the carboxyl group to yield atranorin, via the proatranorin II and III intermediates if atr2 acts first, or the proatranorin I intermediate if atr3 acts first. This Stereocaulon alpinum (Alpine snow lichen) protein is Non-reducing polyketide synthase atr1.